We begin with the raw amino-acid sequence, 101 residues long: UPF0235 protein Cpha266_2081 (101 aa).

This sequence belongs to the UPF0235 family.

In Chlorobium phaeobacteroides (strain DSM 266 / SMG 266 / 2430), this protein is UPF0235 protein Cpha266_2081.